The sequence spans 224 residues: CRIB domain-containing protein RIC1 (224 aa).

A CRIB domain is found at 29–42; it reads IGFPTDVKHVAHIG. Positions 38–224 are disordered; that stretch reads VAHIGSDGPT…SVDTTCNDII (187 aa). 4 stretches are compositionally biased toward polar residues: residues 69 to 84, 114 to 132, 144 to 155, and 215 to 224; these read SRGN…TNQR, PNHN…ASSD, AHGSTDSSNDQE, and SVDTTCNDII.

Interacts with ARAC11/ROP1. As to expression, expressed in columella cells from the root tip and epidermal cells at the base of lateral roots, leaves, stems, flowers, anthers, pollen and siliques.

The protein resides in the cytoplasm. Its subcellular location is the cytoskeleton. Functionally, functions as a downstream effector of Rho-related GTP binding proteins of the 'Rho of Plants' (ROPs) family. Participates in the propagation of ROP GTPase signals in specific cellular responses. Required for cortical microtubule organization. Promotes microtubule bundling and formation of well-ordered microtubule arrays in the neck region of pavement cells. This restricts cell lateral expansion to generate the narrow neck morphology of pavement cells. Its function is inhibited when it interacts with activated ARAC4/ROP2. Represses ARAC4/ROP2 activation and antagonizes the RIC4-actin pathway that promotes the assembly of cortical actin microfilaments. Acts as a downstream effector of ARAC3/ROP6 which functions in a signaling pathway that negatively regulates clathrin-mediated endocytosis and internalization of PIN1 and PIN2. Required for the asymmetric auxin distribution during root gravitropism and vascular patterning. Positively regulates auxin responses, but negatively regulates ABA responses during lateral root development and primary root elongation. This Arabidopsis thaliana (Mouse-ear cress) protein is CRIB domain-containing protein RIC1 (RIC1).